The following is a 701-amino-acid chain: Elongation factor G 1 (701 aa).

Residues 8-290 enclose the tr-type G domain; the sequence is ERYRNIGISA…AVIDYLPSPL (283 aa). GTP contacts are provided by residues 17–24, 88–92, and 142–145; these read AHIDAGKT, DTPGH, and NKMD.

Belongs to the TRAFAC class translation factor GTPase superfamily. Classic translation factor GTPase family. EF-G/EF-2 subfamily.

It is found in the cytoplasm. In terms of biological role, catalyzes the GTP-dependent ribosomal translocation step during translation elongation. During this step, the ribosome changes from the pre-translocational (PRE) to the post-translocational (POST) state as the newly formed A-site-bound peptidyl-tRNA and P-site-bound deacylated tRNA move to the P and E sites, respectively. Catalyzes the coordinated movement of the two tRNA molecules, the mRNA and conformational changes in the ribosome. This chain is Elongation factor G 1, found in Paraburkholderia xenovorans (strain LB400).